The sequence spans 475 residues: Aspartyl/glutamyl-tRNA(Asn/Gln) amidotransferase subunit B (475 aa).

Belongs to the GatB/GatE family. GatB subfamily. As to quaternary structure, heterotrimer of A, B and C subunits.

The catalysed reaction is L-glutamyl-tRNA(Gln) + L-glutamine + ATP + H2O = L-glutaminyl-tRNA(Gln) + L-glutamate + ADP + phosphate + H(+). It carries out the reaction L-aspartyl-tRNA(Asn) + L-glutamine + ATP + H2O = L-asparaginyl-tRNA(Asn) + L-glutamate + ADP + phosphate + 2 H(+). Allows the formation of correctly charged Asn-tRNA(Asn) or Gln-tRNA(Gln) through the transamidation of misacylated Asp-tRNA(Asn) or Glu-tRNA(Gln) in organisms which lack either or both of asparaginyl-tRNA or glutaminyl-tRNA synthetases. The reaction takes place in the presence of glutamine and ATP through an activated phospho-Asp-tRNA(Asn) or phospho-Glu-tRNA(Gln). In Chromobacterium violaceum (strain ATCC 12472 / DSM 30191 / JCM 1249 / CCUG 213 / NBRC 12614 / NCIMB 9131 / NCTC 9757 / MK), this protein is Aspartyl/glutamyl-tRNA(Asn/Gln) amidotransferase subunit B.